Reading from the N-terminus, the 470-residue chain is Sorting nexin-17 (470 aa).

The PX domain occupies 1–109 (MHFSIPETES…SFLRRAQQET (109 aa)). Positions 36, 38, 62, and 75 each coordinate a 1,2-diacyl-sn-glycero-3-phospho-(1D-myo-inositol-3-phosphate). The region spanning 115 to 206 (EEVSLEVLLS…YKIVLRKSYW (92 aa)) is the Ras-associating domain. The FERM-like stretch occupies residues 115–432 (EEVSLEVLLS…DASRESMVKL (318 aa)). Residues 270 to 432 (GYLRFDACVA…DASRESMVKL (163 aa)) are PTB-like F3 module. Positions 401–425 (GGNLRRSDSQQAVKSPPLLESPDAS) are disordered. A phosphoserine mark is found at Ser407, Ser409, Ser415, Ser421, Ser437, and Ser440.

The protein belongs to the sorting nexin family. As to quaternary structure, monomer. Interacts with APP (via cytoplasmic YXNPXY motif). Interacts with KIF1B. Interacts with the C-termini of P-selectin, PTC, LDLR, VLDLR, LRP1 and LRP8. Interacts with KRIT1 (via N-terminus). Interacts with HRAS. Interacts with ITGB1 and ITGB5 (via NPxY motif). Interacts with CCDC22 and CCDC93; the interaction associates SNX17 with the CCC complex. Interacts (via C-terminus) with VPS26C and VPS35L; the interactions are direct and associate SNX17 with the retriever complex.

Its subcellular location is the cytoplasm. The protein resides in the early endosome. It is found in the cytoplasmic vesicle membrane. Critical regulator of endosomal recycling of numerous surface proteins, including integrins, signaling receptor and channels. Binds to NPxY sequences in the cytoplasmic tails of target cargos. Associates with retriever and CCC complexes to prevent lysosomal degradation and promote cell surface recycling of numerous cargos such as integrins ITGB1, ITGB5 and their associated alpha subunits. Also required for maintenance of normal cell surface levels of APP and LRP1. Interacts with membranes containing phosphatidylinositol 3-phosphate (PtdIns(3P)). The protein is Sorting nexin-17 (Snx17) of Rattus norvegicus (Rat).